The chain runs to 191 residues: Small ribosomal subunit protein uS10c (191 aa).

The transit peptide at 1 to 56 (MAVSTVSSFLLPSFGIPSSSPSSTRLKVSLLPSSSTHGGLSSCVLTKPSVSLTKVF) directs the protein to the chloroplast.

Belongs to the universal ribosomal protein uS10 family. In terms of assembly, part of the 30S ribosomal subunit.

Its subcellular location is the plastid. It is found in the chloroplast. The protein is Small ribosomal subunit protein uS10c (RPS10) of Arabidopsis thaliana (Mouse-ear cress).